Consider the following 323-residue polypeptide: Polycomb complex protein BMI-1-B (323 aa).

An RING-type zinc finger spans residues 18–57 (CVLCGGYFIDAATIIECLHSFCKTCIVRYLETSKYCPICD). Positions 81–95 (KLVPGLFKGEMKRRR) match the Nuclear localization signal motif. Positions 238–310 (PHTDRINNTS…HQNPFANRAR (73 aa)) are disordered. A compositionally biased stretch (low complexity) spans 287–301 (HISSTINGTNSSSSH).

In terms of assembly, component of a PRC1-like complex. Interacts with cbx4.

It localises to the nucleus. Functionally, component of a Polycomb group (PcG) multiprotein PRC1-like complex, a complex class required to maintain the transcriptionally repressive state of many genes, including Hox genes, throughout development. PcG PRC1 complex acts via chromatin remodeling and modification of histones; it mediates monoubiquitination of histone H2A 'Lys-119', rendering chromatin heritably changed in its expressibility. In the PRC1 complex, it is required to stimulate the E3 ubiquitin-protein ligase activity of rnf2. The polypeptide is Polycomb complex protein BMI-1-B (bmi1b) (Xenopus laevis (African clawed frog)).